The primary structure comprises 261 residues: Small ribosomal subunit protein eS1B (261 aa).

Residues 1–18 (MTLGKNKRISKGGKRGKK) show a composition bias toward basic residues. Residues 1 to 23 (MTLGKNKRISKGGKRGKKKAQET) are disordered.

The protein belongs to the eukaryotic ribosomal protein eS1 family. As to quaternary structure, component of the small ribosomal subunit. Mature ribosomes consist of a small (40S) and a large (60S) subunit. The 40S subunit contains about 33 different proteins and 1 molecule of RNA (18S). The 60S subunit contains about 49 different proteins and 3 molecules of RNA (25S, 5.8S and 5S).

The protein resides in the cytoplasm. The polypeptide is Small ribosomal subunit protein eS1B (Trypanosoma cruzi (strain CL Brener)).